A 97-amino-acid chain; its full sequence is Citrate lyase acyl carrier protein 2 (97 aa).

Position 14 is an O-(phosphoribosyl dephospho-coenzyme A)serine (serine 14).

This sequence belongs to the CitD family. As to quaternary structure, oligomer with a subunit composition of (alpha,beta,gamma)6.

Its subcellular location is the cytoplasm. Its function is as follows. Covalent carrier of the coenzyme of citrate lyase. The sequence is that of Citrate lyase acyl carrier protein 2 from Salmonella paratyphi A (strain ATCC 9150 / SARB42).